Here is a 471-residue protein sequence, read N- to C-terminus: Sestrin-2 (471 aa).

N-acetylmethionine is present on Met-1. The N-terminal domain; mediates the alkylhydroperoxide reductase activity stretch occupies residues 57–230 (GLEALMSSGR…APSPPSEQST (174 aa)). Residue Cys-116 is the Cysteine sulfenic acid (-SOH) intermediate of the active site. A Glycyl lysine isopeptide (Lys-Gly) (interchain with G-Cter in ubiquitin) cross-link involves residue Lys-166. Residues 212-241 (DPEGSPAPQAPSPPSEQSTPPSRDSLNHSG) are disordered. Ser-240 carries the phosphoserine modification. The C-terminal domain; mediates TORC1 regulation stretch occupies residues 299–471 (ANPDMLCFVE…ALRAITRYMT (173 aa)). Residues 365 to 368 (TYNT), Thr-377, and Glu-442 each bind L-leucine.

The protein belongs to the sestrin family. In terms of assembly, interacts with the GATOR2 complex which is composed of MIOS, SEC13, SEH1L, WDR24 and WDR59; the interaction is negatively regulated by leucine. Conveys leucine availability via direct interaction with SEH1L and WDR24 components of the GATOR2 complex. Interacts with RRAGA, RRAGB, RRAGC and RRAGD; may function as a guanine nucleotide dissociation inhibitor for RRAGs and regulate them. May interact with the TORC2 complex. Interacts with KEAP1, RBX1, SQSTM and ULK1; to regulate the degradation of KEAP1. May also associate with the complex composed of TSC1, TSC2 and the AMP-responsive protein kinase/AMPK to regulate TORC1 signaling. May interact with PRDX1. In terms of processing, phosphorylated by ULK1 at multiple sites. Post-translationally, ubiquitinated at Lys-166 by RNF167 via 'Lys-63'-linked polyubiquitination in response to leucine deprivation: ubiquitination promotes SESN2-interaction with the GATOR2 complex, leading to inhibit the TORC1 signaling pathway. Deubiquitinated at Lys-166 by STAMBPL1, promoting the TORC1 signaling pathway. Ubiquitinated by RNF186; ubiquitination mediates proteasomal degradation.

It localises to the cytoplasm. It catalyses the reaction a hydroperoxide + L-cysteinyl-[protein] = S-hydroxy-L-cysteinyl-[protein] + an alcohol. Functionally, functions as an intracellular leucine sensor that negatively regulates the mTORC1 signaling pathway through the GATOR complex. In absence of leucine, binds the GATOR subcomplex GATOR2 and prevents mTORC1 signaling. Binding of leucine to SESN2 disrupts its interaction with GATOR2 thereby activating the TORC1 signaling pathway. This stress-inducible metabolic regulator also plays a role in protection against oxidative and genotoxic stresses. May negatively regulate protein translation in response to endoplasmic reticulum stress, via mTORC1. May positively regulate the transcription by NFE2L2 of genes involved in the response to oxidative stress by facilitating the SQSTM1-mediated autophagic degradation of KEAP1. May also mediate TP53 inhibition of TORC1 signaling upon genotoxic stress. Moreover, may prevent the accumulation of reactive oxygen species (ROS) through the alkylhydroperoxide reductase activity born by the N-terminal domain of the protein. Was originally reported to contribute to oxidative stress resistance by reducing PRDX1. However, this could not be confirmed. The sequence is that of Sestrin-2 from Bos taurus (Bovine).